Here is a 156-residue protein sequence, read N- to C-terminus: Transcription elongation factor GreA (156 aa).

Residues 1-32 (MKKVRLTREGYEKLKQELEELKRKFMYEISER) are a coiled coil.

The protein belongs to the GreA/GreB family.

Functionally, necessary for efficient RNA polymerase transcription elongation past template-encoded arresting sites. The arresting sites in DNA have the property of trapping a certain fraction of elongating RNA polymerases that pass through, resulting in locked ternary complexes. Cleavage of the nascent transcript by cleavage factors such as GreA or GreB allows the resumption of elongation from the new 3'terminus. GreA releases sequences of 2 to 3 nucleotides. This chain is Transcription elongation factor GreA, found in Thermotoga neapolitana (strain ATCC 49049 / DSM 4359 / NBRC 107923 / NS-E).